The primary structure comprises 774 residues: Protein translocase subunit SecA (774 aa).

ATP-binding positions include Gln66, Gly84–Ser88, and Asp474.

It belongs to the SecA family.

The protein localises to the plastid. Its subcellular location is the chloroplast stroma. It is found in the chloroplast thylakoid membrane. It catalyses the reaction ATP + H2O + cellular proteinSide 1 = ADP + phosphate + cellular proteinSide 2.. In terms of biological role, has a central role in coupling the hydrolysis of ATP to the transfer of proteins across the thylakoid membrane. The chain is Protein translocase subunit SecA from Cyanidioschyzon merolae (strain NIES-3377 / 10D) (Unicellular red alga).